A 504-amino-acid chain; its full sequence is Activin receptor type-1 (504 aa).

An N-terminal signal peptide occupies residues 1 to 16 (MALPVLLLLLALPSRS). At 17-119 (VQDEELKLNE…EAAGYSMETL (103 aa)) the chain is on the extracellular side. N-linked (GlcNAc...) asparagine glycosylation occurs at Asn-94. A helical membrane pass occupies residues 120–140 (IIVILAPVVVLVIFSVVAVLI). The Cytoplasmic portion of the chain corresponds to 141–504 (IRRIQKNHME…NSLDKLKADC (364 aa)). The GS domain occupies 173–202 (STLADLLDHSCTSGSGSGLPFLVQRTVARQ). The 295-residue stretch at 203-497 (ITLVECVGKG…KTLTKIDNSL (295 aa)) folds into the Protein kinase domain. Residues 209 to 217 (VGKGRYGEV) and Lys-230 contribute to the ATP site. The Proton acceptor role is filled by Asp-331.

The protein belongs to the protein kinase superfamily. TKL Ser/Thr protein kinase family. TGFB receptor subfamily. Requires Mg(2+) as cofactor. Mn(2+) serves as cofactor.

It localises to the membrane. The catalysed reaction is L-threonyl-[receptor-protein] + ATP = O-phospho-L-threonyl-[receptor-protein] + ADP + H(+). It catalyses the reaction L-seryl-[receptor-protein] + ATP = O-phospho-L-seryl-[receptor-protein] + ADP + H(+). Its function is as follows. On ligand binding, forms a receptor complex consisting of two type II and two type I transmembrane serine/threonine kinases. Type II receptors phosphorylate and activate type I receptors which autophosphorylate, then bind and activate SMAD transcriptional regulators. Receptor for activin. This chain is Activin receptor type-1 (ACVR1), found in Gallus gallus (Chicken).